The chain runs to 323 residues: MTNIVVSYILNPLIYMVPVLLAVAFLTLIERKVLGYMQLRKGPNIVGPYGLLQPIADGVKLFIKEPIRPSTSSPSLFVLPVLALTLALTLWAPMPMPFPVADLNLSILFVLALSSLAVYSILGSGWASNSKYALVGALRAVAQTISYEVSLGLILLSVIIFSGGFTLQTFSTTQEATWLALPAWPLAAMWYISTLEETNRAPFDLTEGESELVSGFNVEYAGGPFALFFLAEYANILLMNTLSAVLFLGSSYSTTMPEFTSLTLMTKAALLSMVFLWVRASYPRFRYDQLMHLVWKNFLPLTLALVIWHLSLSTACAGLPPHA.

Helical transmembrane passes span 9–29 (ILNP…LTLI), 76–96 (LFVL…PMPM), 107–127 (ILFV…SGWA), 145–165 (ISYE…SGGF), 175–195 (EATW…ISTL), 227–247 (LFFL…AVLF), 258–278 (EFTS…FLWV), and 298–318 (FLPL…ACAG).

This sequence belongs to the complex I subunit 1 family.

It is found in the mitochondrion inner membrane. It catalyses the reaction a ubiquinone + NADH + 5 H(+)(in) = a ubiquinol + NAD(+) + 4 H(+)(out). Functionally, core subunit of the mitochondrial membrane respiratory chain NADH dehydrogenase (Complex I) that is believed to belong to the minimal assembly required for catalysis. Complex I functions in the transfer of electrons from NADH to the respiratory chain. The immediate electron acceptor for the enzyme is believed to be ubiquinone. The chain is NADH-ubiquinone oxidoreductase chain 1 (MT-ND1) from Gadus morhua (Atlantic cod).